A 330-amino-acid polypeptide reads, in one-letter code: Glycerol-3-phosphate dehydrogenase [NAD(P)+] (330 aa).

Positions 10, 11, 31, and 105 each coordinate NADPH. 3 residues coordinate sn-glycerol 3-phosphate: lysine 105, glycine 135, and serine 137. An NADPH-binding site is contributed by alanine 139. Sn-glycerol 3-phosphate contacts are provided by lysine 190, aspartate 243, serine 253, arginine 254, and asparagine 255. Lysine 190 (proton acceptor) is an active-site residue. Position 254 (arginine 254) interacts with NADPH. Positions 278 and 280 each coordinate NADPH.

This sequence belongs to the NAD-dependent glycerol-3-phosphate dehydrogenase family.

The protein localises to the cytoplasm. It carries out the reaction sn-glycerol 3-phosphate + NAD(+) = dihydroxyacetone phosphate + NADH + H(+). The enzyme catalyses sn-glycerol 3-phosphate + NADP(+) = dihydroxyacetone phosphate + NADPH + H(+). The protein operates within membrane lipid metabolism; glycerophospholipid metabolism. Its function is as follows. Catalyzes the reduction of the glycolytic intermediate dihydroxyacetone phosphate (DHAP) to sn-glycerol 3-phosphate (G3P), the key precursor for phospholipid synthesis. This chain is Glycerol-3-phosphate dehydrogenase [NAD(P)+], found in Nitratidesulfovibrio vulgaris (strain ATCC 29579 / DSM 644 / CCUG 34227 / NCIMB 8303 / VKM B-1760 / Hildenborough) (Desulfovibrio vulgaris).